The chain runs to 81 residues: Large ribosomal subunit protein bL31B (81 aa).

This sequence belongs to the bacterial ribosomal protein bL31 family. Type B subfamily. As to quaternary structure, part of the 50S ribosomal subunit.

The sequence is that of Large ribosomal subunit protein bL31B from Borreliella afzelii (strain PKo) (Borrelia afzelii).